We begin with the raw amino-acid sequence, 597 residues long: DNA primase (597 aa).

Zn(2+) contacts are provided by Cys-40, His-43, Cys-61, and Cys-64. The CHC2-type zinc finger occupies 40–64 (CPFHGEKTPSFSVSPEKQIFHCFGC). Positions 262 to 342 (QEALLVEGFA…RVKVASLPNG (81 aa)) constitute a Toprim domain. Glu-268, Asp-311, and Asp-313 together coordinate Mg(2+). Basic and acidic residues predominate over residues 429 to 447 (LSRSQRERTKPREAPDGET). A disordered region spans residues 429-448 (LSRSQRERTKPREAPDGETA).

It belongs to the DnaG primase family. As to quaternary structure, monomer. Interacts with replicative helicase DnaB, as DnaB(6):DnaG(3). A stable complex DnaI(6):DnaB(6):DnaG(3) fragment can be isolated; DnaI and DnaG do not contact each other (DnaI in this complex is derived from B.subtilis). Zn(2+) is required as a cofactor. Mg(2+) serves as cofactor.

It carries out the reaction ssDNA + n NTP = ssDNA/pppN(pN)n-1 hybrid + (n-1) diphosphate.. Its function is as follows. RNA polymerase that catalyzes the synthesis of short RNA molecules used as primers for DNA polymerase during DNA replication. The polypeptide is DNA primase (Geobacillus stearothermophilus (Bacillus stearothermophilus)).